Consider the following 180-residue polypeptide: ATP synthase subunit delta (180 aa).

It belongs to the ATPase delta chain family. As to quaternary structure, F-type ATPases have 2 components, F(1) - the catalytic core - and F(0) - the membrane proton channel. F(1) has five subunits: alpha(3), beta(3), gamma(1), delta(1), epsilon(1). F(0) has three main subunits: a(1), b(2) and c(10-14). The alpha and beta chains form an alternating ring which encloses part of the gamma chain. F(1) is attached to F(0) by a central stalk formed by the gamma and epsilon chains, while a peripheral stalk is formed by the delta and b chains.

It localises to the cell membrane. In terms of biological role, f(1)F(0) ATP synthase produces ATP from ADP in the presence of a proton or sodium gradient. F-type ATPases consist of two structural domains, F(1) containing the extramembraneous catalytic core and F(0) containing the membrane proton channel, linked together by a central stalk and a peripheral stalk. During catalysis, ATP synthesis in the catalytic domain of F(1) is coupled via a rotary mechanism of the central stalk subunits to proton translocation. Functionally, this protein is part of the stalk that links CF(0) to CF(1). It either transmits conformational changes from CF(0) to CF(1) or is implicated in proton conduction. This Ligilactobacillus salivarius (strain UCC118) (Lactobacillus salivarius) protein is ATP synthase subunit delta.